Consider the following 304-residue polypeptide: uncharacterized protein (304 aa).

This is an uncharacterized protein from Methanocaldococcus jannaschii (strain ATCC 43067 / DSM 2661 / JAL-1 / JCM 10045 / NBRC 100440) (Methanococcus jannaschii).